The chain runs to 225 residues: Reticulon-like protein B9 (225 aa).

The 186-residue stretch at valine 39–phenylalanine 224 folds into the Reticulon domain. The next 3 membrane-spanning stretches (helical) occupy residues isoleucine 50–tyrosine 70, phenylalanine 72–threonine 92, and tyrosine 152–valine 172.

It localises to the endoplasmic reticulum membrane. The sequence is that of Reticulon-like protein B9 (RTNLB9) from Arabidopsis thaliana (Mouse-ear cress).